A 470-amino-acid polypeptide reads, in one-letter code: ATP synthase subunit beta (470 aa).

ATP is bound at residue 155–162 (GGAGVGKT).

This sequence belongs to the ATPase alpha/beta chains family. As to quaternary structure, F-type ATPases have 2 components, CF(1) - the catalytic core - and CF(0) - the membrane proton channel. CF(1) has five subunits: alpha(3), beta(3), gamma(1), delta(1), epsilon(1). CF(0) has three main subunits: a(1), b(2) and c(9-12). The alpha and beta chains form an alternating ring which encloses part of the gamma chain. CF(1) is attached to CF(0) by a central stalk formed by the gamma and epsilon chains, while a peripheral stalk is formed by the delta and b chains.

The protein resides in the cell membrane. The catalysed reaction is ATP + H2O + 4 H(+)(in) = ADP + phosphate + 5 H(+)(out). Its function is as follows. Produces ATP from ADP in the presence of a proton gradient across the membrane. The catalytic sites are hosted primarily by the beta subunits. This is ATP synthase subunit beta from Lacticaseibacillus casei (Lactobacillus casei).